The following is a 174-amino-acid chain: Peptide methionine sulfoxide reductase MsrA (174 aa).

Residue C10 is part of the active site.

The protein belongs to the MsrA Met sulfoxide reductase family.

It catalyses the reaction L-methionyl-[protein] + [thioredoxin]-disulfide + H2O = L-methionyl-(S)-S-oxide-[protein] + [thioredoxin]-dithiol. The catalysed reaction is [thioredoxin]-disulfide + L-methionine + H2O = L-methionine (S)-S-oxide + [thioredoxin]-dithiol. Functionally, has an important function as a repair enzyme for proteins that have been inactivated by oxidation. Catalyzes the reversible oxidation-reduction of methionine sulfoxide in proteins to methionine. The chain is Peptide methionine sulfoxide reductase MsrA from Acinetobacter baumannii (strain SDF).